The primary structure comprises 241 residues: Ubiquinone biosynthesis O-methyltransferase (241 aa).

Residues arginine 46, glycine 66, aspartate 87, and methionine 131 each coordinate S-adenosyl-L-methionine.

This sequence belongs to the methyltransferase superfamily. UbiG/COQ3 family.

It carries out the reaction a 3-demethylubiquinol + S-adenosyl-L-methionine = a ubiquinol + S-adenosyl-L-homocysteine + H(+). It catalyses the reaction a 3-(all-trans-polyprenyl)benzene-1,2-diol + S-adenosyl-L-methionine = a 2-methoxy-6-(all-trans-polyprenyl)phenol + S-adenosyl-L-homocysteine + H(+). It participates in cofactor biosynthesis; ubiquinone biosynthesis. Its function is as follows. O-methyltransferase that catalyzes the 2 O-methylation steps in the ubiquinone biosynthetic pathway. This Bordetella pertussis (strain Tohama I / ATCC BAA-589 / NCTC 13251) protein is Ubiquinone biosynthesis O-methyltransferase.